The sequence spans 812 residues: MIEIVHSLPTPHDAVRAAADGAGRLIPPLWPLASSVAVNPFLGHTGEPLWAAGARLGRASGAAVTMPRSWYRDRIAAGSITDEDLLDALADAPADLRPADLGALRGAAALDPEPVRPLPTVASLCAEASGIDWPGLIADRLGAWAAGHFDEGQALWAAPSGGSTLALWRAWAIHDLTPEIAGLGGFARHVSEVPDGALPALARAVCGLGLSPGALESYFHQILLSLGGWAQYARYKLWQAELAGGTDGTLRDLLAVRVIWDEALLTRYGERIAESWAAVAAAHASPARPTRDLVIDSILQDAAERAAQRALAATLAATLAGGSPGVGESRPALQAAFCIDVRSEVFRRALESLDPGIRTLGFAGFFGLATAHRRFASDIAERRLPVLLNPGLRTCAGGPALSDADHASRLAARARRAWGRFRQAAVSSFAFVEAAGPLYAAKLLGDSLHLGGPATPHDPMPRLDPPRDLASRVATADAVLRAMSLTSTFAPIVLLVGHGANVVNNPHASALHCGACGGYSGEVNARLLAQLLNDADVRAGLRERGLEVPADTVFLAGLHDTTTDEVTLYAGDLPGGSPLQGLEPVRVWLAQAGKLARAERALRLPRARDNASVVRRSRDWAETRPEWGLAGCNAFIAAPRHRTAGQPLHGRAFLHDYDWQRDEGFGVLELIVTAPVVVASWISLQYYGSTVAPELFGSGNKLLHNVVGGIGVLEGNGGPLRAGLPRQSVHDGEHHAHEPLRLSVLIEAPRQAITDVLERHREVRALFDNRWLHLFALDQDGRMAWRYAGDLRWTSTAASDGAVPGLPLRAAV.

Zn(2+)-binding residues include Cys338, Asp340, His498, and Cys513.

Belongs to the inorganic carbon transporter (TC 9.A.2) DabA family. Forms a complex with DabB. Zn(2+) is required as a cofactor.

It is found in the cell inner membrane. Functionally, part of an energy-coupled inorganic carbon pump. The protein is Probable inorganic carbon transporter subunit DabA of Methylobacterium sp. (strain 4-46).